A 260-amino-acid polypeptide reads, in one-letter code: Phosphate import ATP-binding protein PstB (260 aa).

In terms of domain architecture, ABC transporter spans 14–255; the sequence is IETENLNLFY…PKNTKTEEYI (242 aa). 46–53 provides a ligand contact to ATP; sequence GPSGCGKS.

This sequence belongs to the ABC transporter superfamily. Phosphate importer (TC 3.A.1.7) family. In terms of assembly, the complex is composed of two ATP-binding proteins (PstB), two transmembrane proteins (PstC and PstA) and a solute-binding protein (PstS).

The protein localises to the cell inner membrane. It carries out the reaction phosphate(out) + ATP + H2O = ADP + 2 phosphate(in) + H(+). Part of the ABC transporter complex PstSACB involved in phosphate import. Responsible for energy coupling to the transport system. This is Phosphate import ATP-binding protein PstB from Borreliella afzelii (strain PKo) (Borrelia afzelii).